Here is a 615-residue protein sequence, read N- to C-terminus: Protein translocase subunit SecD (615 aa).

The next 6 helical transmembrane spans lie at tyrosine 10 to glycine 30, glutamine 452 to tyrosine 472, leucine 477 to leucine 497, methionine 504 to isoleucine 524, tyrosine 546 to tyrosine 568, and glycine 585 to tyrosine 605.

This sequence belongs to the SecD/SecF family. SecD subfamily. In terms of assembly, forms a complex with SecF. Part of the essential Sec protein translocation apparatus which comprises SecA, SecYEG and auxiliary proteins SecDF-YajC and YidC.

It localises to the cell inner membrane. In terms of biological role, part of the Sec protein translocase complex. Interacts with the SecYEG preprotein conducting channel. SecDF uses the proton motive force (PMF) to complete protein translocation after the ATP-dependent function of SecA. This Salmonella choleraesuis (strain SC-B67) protein is Protein translocase subunit SecD.